A 291-amino-acid polypeptide reads, in one-letter code: Glycolipid transfer protein domain-containing protein 2 (291 aa).

Asn276 is a glycosylation site (N-linked (GlcNAc...) asparagine).

This sequence belongs to the GLTP family.

The chain is Glycolipid transfer protein domain-containing protein 2 (GLTPD2) from Homo sapiens (Human).